The sequence spans 308 residues: MADTAAGPGGSGTRPGSKQSTNPADNYHLARRRTLQVVVSSLLTEAGFESAEKASVETLTEMLQSYISEIGRSAKSYCEHTARTQPTLSDIVVTLVEMGFNVDTLPAYAKRSQRMVITAPPVTNQPVTPKALTAGQNRPHPPHIPSHFPEFPDPHTYIKTPTYREPVSDYQILREKAASQRRDVERALTRFMAKTGETQSLFKDDVSTFPLIAARPFTIPYLTALLPSELEIQQMEETDSSEQEEQTDTENNALHISTDDSGAEKESASVLQQSSSLSGSRNGEESVIDNPYLRPVKKPKIRRKKSLS.

The segment at 1-29 (MADTAAGPGGSGTRPGSKQSTNPADNYHL) is disordered. An N-acetylalanine modification is found at A2. The span at 14–24 (RPGSKQSTNPA) shows a compositional bias: polar residues. Residues 35–102 (LQVVVSSLLT…VTLVEMGFNV (68 aa)) enclose the Histone-fold domain. T128 is subject to Phosphothreonine. Acidic residues predominate over residues 235-248 (MEETDSSEQEEQTD). The tract at residues 235 to 308 (MEETDSSEQE…PKIRRKKSLS (74 aa)) is disordered. The span at 268 to 281 (ASVLQQSSSLSGSR) shows a compositional bias: low complexity. S269 is subject to Phosphoserine. Positions 292–305 (YLRPVKKPKIRRKK) match the Nuclear localization signal motif. Residues 295–308 (PVKKPKIRRKKSLS) are compositionally biased toward basic residues.

This sequence belongs to the TAF8 family. In terms of assembly, component of the TFIID basal transcription factor complex, composed of TATA-box-binding protein TBP, and a number of TBP-associated factors (TAFs), including TAF1, TAF2, TAF3, TAF4, TAF5, TAF6, TAF7, TAF8, TAF9, TAF10, TAF11, TAF12 and TAF13. Interacts with TBP, TAF1, TAF6, TAF10, TAF11 and TAF13. Component also of a small TAF complex (SMAT) containing TAF8, TAF10 and SUPT7L. Forms a heterodimer with TAF10. Interaction with TAF10 is mediated mainly via its histone fold domain while interaction with SUPT7L is via its C-terminal region. In terms of tissue distribution, low level of expression throughout the brain with slightly higher expression in the hippocampus.

Its subcellular location is the nucleus. It localises to the cytoplasm. Its function is as follows. The TFIID basal transcription factor complex plays a major role in the initiation of RNA polymerase II (Pol II)-dependent transcription. TFIID recognizes and binds promoters with or without a TATA box via its subunit TBP, a TATA-box-binding protein, and promotes assembly of the pre-initiation complex (PIC). The TFIID complex consists of TBP and TBP-associated factors (TAFs), including TAF1, TAF2, TAF3, TAF4, TAF5, TAF6, TAF7, TAF8, TAF9, TAF10, TAF11, TAF12 and TAF13. The TFIID complex structure can be divided into 3 modules TFIID-A, TFIID-B, and TFIID-C. TAF8 is involved in forming the TFIID-B module, together with TAF5. Mediates both basal and activator-dependent transcription. Plays a role in the differentiation of preadipocyte fibroblasts to adipocytes, however, does not seem to play a role in differentiation of myoblasts. Required for the integration of TAF10 in the TAF complex. May be important for survival of cells of the inner cell mass which constitute the pluripotent cell population of the early embryo. In Mus musculus (Mouse), this protein is Transcription initiation factor TFIID subunit 8 (Taf8).